The primary structure comprises 1098 residues: Sister-chromatid cohesion protein 3 (1098 aa).

The disordered stretch occupies residues 1–68 (MEDSPQGLKR…RSRTHPPQQN (68 aa)). Positions 245 to 265 (RVDSLNKRLSVTHEQITTLED) form a coiled coil. Positions 275–360 (FVHRYRDIDN…QRFSNRMIEM (86 aa)) constitute an SCD domain. Coiled coils occupy residues 632–653 (KLKD…EVKD), 888–908 (LESL…GREE), and 1009–1032 (LETL…ANVR). The tract at residues 1027 to 1077 (EAANVRRRGRPRKRPETERKRLFDEQSGSDEDESISGGSDREDKLDEDAPL) is disordered. The segment covering 1040 to 1050 (RPETERKRLFD) has biased composition (basic and acidic residues).

Belongs to the SCC3 family. As to quaternary structure, part of the cohesin complex. Interacts with DEK3. In terms of tissue distribution, expressed in roots, mature leaves, buds and seedlings.

It localises to the nucleus. Its subcellular location is the chromosome. Essential component of cohesin complex, a complex required for the cohesion of sister chromatids after DNA replication. The cohesin complex apparently forms a large proteinaceous ring within which sister chromatids can be trapped. At anaphase, the complex is cleaved and dissociates from chromatin, allowing sister chromatids to segregate. The cohesin complex may also play a role in spindle pole assembly during mitosis. Required for centromere cohesion maintenance at anaphase I and for the monopolar orientation of the kinetochores during both male and female meiosis. Also involved in mitosis. The sequence is that of Sister-chromatid cohesion protein 3 from Arabidopsis thaliana (Mouse-ear cress).